Consider the following 305-residue polypeptide: MWSLRLHPSPFGAACQGIFTSTSLLFLVTVPLVCTIVYDSCLYMDVNASRALANVYDLPDDFFPQIDDLVRDAKDALEPYWKAETIKKHVLIATHFVDLIEDFWQTTQGMSQIADALRAVIPPTTVPVPEGFLITHSEAEEIPLNDLFSNQEERIVNFQPDYPITARIHTHLRVYTKLNEQALDKARRLLWWHYNCLLWGEATVTNYISRLRTWLSTPEKYRGKDAPTIEAITRPIQVAQGGRNQTKGTRKPRGLEPRRRKVKTTVVYGRRRSKSRGRRSSPSQRAGSPLPRNRGNQTRSPSPRE.

A signal peptide spans 1-19 (MWSLRLHPSPFGAACQGIF). The segment at 226–305 (APTIEAITRP…NQTRSPSPRE (80 aa)) is disordered. The segment covering 248–279 (GTRKPRGLEPRRRKVKTTVVYGRRRSKSRGRR) has biased composition (basic residues). Residues 273–305 (SKSRGRRSSPSQRAGSPLPRNRGNQTRSPSPRE) constitute a propeptide that is removed on maturation. Residues 294 to 305 (RGNQTRSPSPRE) show a composition bias toward polar residues.

It belongs to the avihepadnavirus precore antigen family. Homodimerizes.

The protein resides in the secreted. Its function is as follows. May regulate immune response to the intracellular capsid in acting as a T-cell tolerogen, by having an immunoregulatory effect which prevents destruction of infected cells by cytotoxic T-cells. This chain is External core antigen (C), found in Heron hepatitis B virus (HHBV).